The primary structure comprises 386 residues: S-adenosylmethionine synthase (386 aa).

Position 16 (H16) interacts with ATP. D18 is a Mg(2+) binding site. E44 is a K(+) binding site. L-methionine-binding residues include E57 and Q100. Residues 100-110 (QSRDITQGVDR) form a flexible loop region. ATP contacts are provided by residues 165–167 (DAK), D240, 246–247 (RK), A263, and K267. L-methionine is bound at residue D240. K271 contributes to the L-methionine binding site.

It belongs to the AdoMet synthase family. In terms of assembly, homotetramer; dimer of dimers. The cofactor is Mg(2+). K(+) is required as a cofactor.

The protein localises to the cytoplasm. It carries out the reaction L-methionine + ATP + H2O = S-adenosyl-L-methionine + phosphate + diphosphate. Its pathway is amino-acid biosynthesis; S-adenosyl-L-methionine biosynthesis; S-adenosyl-L-methionine from L-methionine: step 1/1. Functionally, catalyzes the formation of S-adenosylmethionine (AdoMet) from methionine and ATP. The overall synthetic reaction is composed of two sequential steps, AdoMet formation and the subsequent tripolyphosphate hydrolysis which occurs prior to release of AdoMet from the enzyme. The polypeptide is S-adenosylmethionine synthase (Francisella tularensis subsp. tularensis (strain FSC 198)).